The primary structure comprises 408 residues: Echinulin prenyltransferase 2 (408 aa).

Dimethylallyl diphosphate is bound by residues Arg94, Lys181, Tyr183, Arg248, Lys250, Tyr252, Gln334, Tyr336, Tyr400, and Tyr404.

The protein belongs to the tryptophan dimethylallyltransferase family.

It carries out the reaction preechinulin + dimethylallyl diphosphate = tardioxopiperazine B + diphosphate. The enzyme catalyses preechinulin + dimethylallyl diphosphate = tardioxopiperazine A + diphosphate. The catalysed reaction is tardioxopiperazine A + dimethylallyl diphosphate = echinulin + diphosphate. It catalyses the reaction tardioxopiperazine A + dimethylallyl diphosphate = variecolorin L + diphosphate. It carries out the reaction neoechinulin A + dimethylallyl diphosphate = variecolorin G + diphosphate. The enzyme catalyses neoechinulin A + dimethylallyl diphosphate = isoechinulin A + diphosphate. The catalysed reaction is isoechinulin A + dimethylallyl diphosphate = dehydroechinulin + diphosphate. It catalyses the reaction neoechinulin B + dimethylallyl diphosphate = isoechinulin B + diphosphate. Its pathway is secondary metabolite biosynthesis. It participates in alkaloid biosynthesis. Its function is as follows. Prenyltransferase; part of the gene cluster that mediates the biosynthesis of echinulin family alkaloid. The pathway begins with the biosynthesis of the cyclic dipeptide cyclo-L-Trp-L-Ala (cyclo-TA) by the NRPS echPS via condensation of L-alanine and L-tryptophan. The prenyltransferase echPT1 then catalyzes the first prenylation step, a reverse prenylation reaction at C2, to yield preechinulin. Preechinulin is the substrate of the cytochrome P450 monooxygenase echP450 that catalyzes the formation of the double bond between C10 and C11 to produce neoechulin A. The unique prenyltransferase echPT2 functions as a competitive enzyme with echP450 for preechinulin metabolization and uses preechinulin for effective regiospecific prenylations. Preechinulin is prenylated by echPT2 at C5 or C7. C7-prenylation leads to accumulation of tardioxopiperazine B without further modification by echPT2. In contrast, the C5-prenylated tardioxopiperazine A can be prenylated again by echPT2, predominantly at C7 to form echinulin or less frequently at C4 to give variecolorin L. EchPT2 also accepts neoechilunin A to produce varlecolorin G (prenylation at C5) or isoechinulin A (prenylation at C7). EchPT2 further converts isoechinulin A into dehydroechinulin. Moreover, a yet unidentified enzyme can also convert neoechilunin A into neoechilunin B by introducing a double bond between positions C14 and C17 and thus provides a further substrate to echPT2 for C5 and C7 prenylation. This chain is Echinulin prenyltransferase 2, found in Aspergillus ruber (Eurotium rubrum).